A 164-amino-acid polypeptide reads, in one-letter code: HTH-type transcriptional regulator IscR (164 aa).

In terms of domain architecture, HTH rrf2-type spans 2–131 (RLTSKGRYAV…NNITLAELVN (130 aa)). A DNA-binding region (H-T-H motif) is located at residues 28-51 (LADISERQGISLSYLEQLFSRLRK). 3 residues coordinate [2Fe-2S] cluster: Cys-92, Cys-98, and Cys-104. The tract at residues 143–164 (NNDTRRTANGRPQETINVNLRA) is disordered. Positions 152–164 (GRPQETINVNLRA) are enriched in polar residues.

[2Fe-2S] cluster serves as cofactor.

Regulates the transcription of several operons and genes involved in the biogenesis of Fe-S clusters and Fe-S-containing proteins. The chain is HTH-type transcriptional regulator IscR from Yersinia enterocolitica serotype O:8 / biotype 1B (strain NCTC 13174 / 8081).